The chain runs to 538 residues: MFS-type transporter tndD (538 aa).

Residues 1–42 (MSLSGSDSHLAVSPTLAEDMNSSDTSAGLAETPPADEEKRSI) form a disordered region. Asn21 and Asn71 each carry an N-linked (GlcNAc...) asparagine glycan. Helical transmembrane passes span 81–101 (VGIV…FAPG), 115–135 (LLAG…PLIL), 153–173 (ICFT…MLIA), 203–223 (GGVI…GPVA), 235–255 (WVFW…FLFL), 309–329 (PIVA…YLMF), 348–368 (GLTF…IGAV), 394–414 (LPPL…YGWS), 422–442 (IVPI…FMCI), 444–464 (SYLV…NTVV), and 485–505 (LGWG…IPWA).

It belongs to the major facilitator superfamily.

It is found in the membrane. Its function is as follows. MFS-type transporter; part of the gene cluster that mediates the biosynthesis of talaronoid C, a fusicoccane diterpenoid with an unprecedented tricyclic 5/8/6 ring system. This chain is MFS-type transporter tndD, found in Aspergillus flavipes.